Reading from the N-terminus, the 556-residue chain is Formate--tetrahydrofolate ligase (556 aa).

ATP is bound at residue 65 to 72 (TPAGEGKT).

This sequence belongs to the formate--tetrahydrofolate ligase family.

It catalyses the reaction (6S)-5,6,7,8-tetrahydrofolate + formate + ATP = (6R)-10-formyltetrahydrofolate + ADP + phosphate. Its pathway is one-carbon metabolism; tetrahydrofolate interconversion. This is Formate--tetrahydrofolate ligase from Peptoclostridium acidaminophilum (Eubacterium acidaminophilum).